The sequence spans 1349 residues: Protein strawberry notch homolog 2 (1349 aa).

Disordered regions lie at residues 170–212 (YQSH…QHPD), 609–633 (STRR…PKAS), and 1319–1349 (PTET…FPNS). The segment covering 177-188 (EEEEGEEEEETE) has biased composition (acidic residues). The span at 609–631 (STRRRRDRGGGKRKRRPRGRGPK) shows a compositional bias: basic residues.

It belongs to the SBNO family. As to quaternary structure, interacts with TAL1; this interaction inhibits TAL1 occupancy of the DCSTAMP promoter, leading to the activation of the DCSTAMP promoter by the transcription factor MITF. As to expression, expressed in the spleen and bone marrow, and to a lesser extent in the kidney, liver, brain, skin, heart and muscle. Expressed predominantly in osteoclasts, and to a lesser extent in T-cells, B-cells and osteoblasts. Expressed in macrophages.

Functionally, acts as a transcriptional coregulator, that can have both coactivator and corepressor functions. Inhibits the DCSTAMP-repressive activity of TAL1, hence enhancing the access of the transcription factor MITF to the DC-STAMP promoter in osteoclast. Plays a role in bone homeostasis; required as a positive regulator in TNFSF11//RANKL-mediated osteoclast fusion via a DCSTAMP-dependent pathway. May also be required in the regulation of osteoblast differentiation. Involved in the transcriptional corepression of NF-kappaB in macrophages. Plays a role as a regulator in the pro-inflammatory cascade. This Mus musculus (Mouse) protein is Protein strawberry notch homolog 2 (Sbno2).